A 206-amino-acid polypeptide reads, in one-letter code: MTAKSVVVLDYGSGNLRSAQRALQRVGAEVEVTADTDAAMTADGLVVPGVGAFAACMAGLRKISGERIIAERVAAGRPVLGVCVGMQILFACGVEFGVQTPGCGHWPGAVIRLEAPVIPHMGWNVVDSAAGSALFKGLDVDARFYFVHSYAAQRWEGSPDALLTWATYRAPFLAAVEDGALAATQFHPEKSGDAGAAVLSNWVDGL.

The Glutamine amidotransferase type-1 domain occupies 5–206; sequence SVVVLDYGSG…AVLSNWVDGL (202 aa). The active-site Nucleophile is the Cys-83. Catalysis depends on residues His-187 and Glu-189.

As to quaternary structure, heterodimer of HisH and HisF.

The protein localises to the cytoplasm. The catalysed reaction is 5-[(5-phospho-1-deoxy-D-ribulos-1-ylimino)methylamino]-1-(5-phospho-beta-D-ribosyl)imidazole-4-carboxamide + L-glutamine = D-erythro-1-(imidazol-4-yl)glycerol 3-phosphate + 5-amino-1-(5-phospho-beta-D-ribosyl)imidazole-4-carboxamide + L-glutamate + H(+). It carries out the reaction L-glutamine + H2O = L-glutamate + NH4(+). Its pathway is amino-acid biosynthesis; L-histidine biosynthesis; L-histidine from 5-phospho-alpha-D-ribose 1-diphosphate: step 5/9. Its function is as follows. IGPS catalyzes the conversion of PRFAR and glutamine to IGP, AICAR and glutamate. The HisH subunit catalyzes the hydrolysis of glutamine to glutamate and ammonia as part of the synthesis of IGP and AICAR. The resulting ammonia molecule is channeled to the active site of HisF. This Mycobacterium bovis (strain ATCC BAA-935 / AF2122/97) protein is Imidazole glycerol phosphate synthase subunit HisH (hisH).